The primary structure comprises 252 residues: 3-deoxy-manno-octulosonate cytidylyltransferase (252 aa).

Belongs to the KdsB family.

The protein localises to the cytoplasm. It carries out the reaction 3-deoxy-alpha-D-manno-oct-2-ulosonate + CTP = CMP-3-deoxy-beta-D-manno-octulosonate + diphosphate. Its pathway is nucleotide-sugar biosynthesis; CMP-3-deoxy-D-manno-octulosonate biosynthesis; CMP-3-deoxy-D-manno-octulosonate from 3-deoxy-D-manno-octulosonate and CTP: step 1/1. It participates in bacterial outer membrane biogenesis; lipopolysaccharide biosynthesis. Activates KDO (a required 8-carbon sugar) for incorporation into bacterial lipopolysaccharide in Gram-negative bacteria. This Nitratidesulfovibrio vulgaris (strain DP4) (Desulfovibrio vulgaris) protein is 3-deoxy-manno-octulosonate cytidylyltransferase.